Reading from the N-terminus, the 129-residue chain is Phenazine antibiotic resistance protein EhpR (129 aa).

Positions 10-128 (TPNLQLVYVS…DGHIIRVCPL (119 aa)) constitute a VOC domain. D-alanylgriseoluteate-binding positions include 42 to 43 (RY) and tryptophan 57.

In terms of assembly, homodimer.

Functionally, required for resistance to the phenazine antibiotic D-alanylgriseoluteic acid (AGA), an antibiotic produced by E.agglomerans itself, and thus protects the bacterium against phenazine toxicity. Probably binds AGA and acts as a chaperone that works in tandem with a membrane transporter for subsequent antibiotic secretion. The sequence is that of Phenazine antibiotic resistance protein EhpR from Enterobacter agglomerans (Erwinia herbicola).